A 446-amino-acid chain; its full sequence is Nitrate/nitrite binding protein NrtA (446 aa).

A signal peptide spans 1-28 (MSNFSRSTRRKFMFTAGAAAIGGVVLHG). Cys-29 carries the N-palmitoyl cysteine lipid modification. A lipid anchor (S-diacylglycerol cysteine) is attached at Cys-29. 5 residues coordinate nitrate: Trp-102, Gln-155, His-196, Gly-240, and Lys-269.

This sequence belongs to the CmpA/NrtA family. As to quaternary structure, the complex is composed of two ATP-binding proteins (NrtC and NrtD), two transmembrane proteins (NrtB) and a solute-binding protein (NrtA).

It is found in the cell inner membrane. Functionally, part of the ABC transporter complex NrtABCD involved in nitrate uptake. The complex is probably also involved in nitrite transport. NrtA is the substrate-binding protein. Binds nitrate. This chain is Nitrate/nitrite binding protein NrtA, found in Synechocystis sp. (strain ATCC 27184 / PCC 6803 / Kazusa).